A 261-amino-acid polypeptide reads, in one-letter code: UPF0246 protein Reut_A1014 (261 aa).

This sequence belongs to the UPF0246 family.

This Cupriavidus pinatubonensis (strain JMP 134 / LMG 1197) (Cupriavidus necator (strain JMP 134)) protein is UPF0246 protein Reut_A1014.